The chain runs to 66 residues: Large ribosomal subunit protein bL33c (66 aa).

This sequence belongs to the bacterial ribosomal protein bL33 family.

It is found in the plastid. The protein resides in the chloroplast. This is Large ribosomal subunit protein bL33c from Illicium oligandrum (Star anise).